Here is a 194-residue protein sequence, read N- to C-terminus: Adenylate kinase (194 aa).

Position 10-15 (10-15 (GAGKGT)) interacts with ATP. An NMP region spans residues 30 to 59 (STGDMLRAAVAAGTPVGLKAKAVMESGGLV). AMP-binding positions include Thr-31, Arg-36, 57–59 (GLV), 85–88 (GFPR), and Gln-92. The interval 126–142 (NRAAEAKAKGEPVRKDD) is LID. Arg-127 is an ATP binding site. Residues Arg-139 and Arg-150 each coordinate AMP. An ATP-binding site is contributed by Ala-178.

It belongs to the adenylate kinase family. As to quaternary structure, monomer.

It is found in the cytoplasm. It catalyses the reaction AMP + ATP = 2 ADP. It participates in purine metabolism; AMP biosynthesis via salvage pathway; AMP from ADP: step 1/1. Its function is as follows. Catalyzes the reversible transfer of the terminal phosphate group between ATP and AMP. Plays an important role in cellular energy homeostasis and in adenine nucleotide metabolism. The polypeptide is Adenylate kinase (Azorhizobium caulinodans (strain ATCC 43989 / DSM 5975 / JCM 20966 / LMG 6465 / NBRC 14845 / NCIMB 13405 / ORS 571)).